Reading from the N-terminus, the 223-residue chain is Small ribosomal subunit protein uS3 (223 aa).

The region spanning 39–107 (VRSYLAKKLS…PVHINIQEIR (69 aa)) is the KH type-2 domain.

The protein belongs to the universal ribosomal protein uS3 family. As to quaternary structure, part of the 30S ribosomal subunit. Forms a tight complex with proteins S10 and S14.

Binds the lower part of the 30S subunit head. Binds mRNA in the 70S ribosome, positioning it for translation. In Nitrosococcus oceani (strain ATCC 19707 / BCRC 17464 / JCM 30415 / NCIMB 11848 / C-107), this protein is Small ribosomal subunit protein uS3.